A 22-amino-acid chain; its full sequence is Motilin (22 aa).

A compositionally biased stretch (polar residues) spans 1 to 11 (FVPFFTQSDIQ). Residues 1-22 (FVPFFTQSDIQKMQEKERNKGQ) form a disordered region. Positions 12–22 (KMQEKERNKGQ) are enriched in basic and acidic residues.

Belongs to the motilin family.

The protein resides in the secreted. Plays an important role in the regulation of interdigestive gastrointestinal motility and indirectly causes rhythmic contraction of duodenal and colonic smooth muscle. This is Motilin (MLN) from Gallus gallus (Chicken).